The following is a 216-amino-acid chain: Uracil phosphoribosyltransferase (216 aa).

Residues Arg84, Arg109, and 137–145 (DPMLATGGS) contribute to the 5-phospho-alpha-D-ribose 1-diphosphate site. Uracil-binding positions include Ile202 and 207–209 (GDA). Residue Asp208 participates in 5-phospho-alpha-D-ribose 1-diphosphate binding.

It belongs to the UPRTase family. Mg(2+) is required as a cofactor.

It carries out the reaction UMP + diphosphate = 5-phospho-alpha-D-ribose 1-diphosphate + uracil. It functions in the pathway pyrimidine metabolism; UMP biosynthesis via salvage pathway; UMP from uracil: step 1/1. Allosterically activated by GTP. Catalyzes the conversion of uracil and 5-phospho-alpha-D-ribose 1-diphosphate (PRPP) to UMP and diphosphate. The chain is Uracil phosphoribosyltransferase from Nostoc sp. (strain PCC 7120 / SAG 25.82 / UTEX 2576).